The following is a 414-amino-acid chain: Isocitrate dehydrogenase [NADP] cytoplasmic (414 aa).

Serine 2 carries the N-acetylserine modification. The residue at position 42 (tyrosine 42) is a Phosphotyrosine. 75–77 (TIT) contributes to the NADP(+) binding site. Threonine 77 serves as a coordination point for substrate. Position 81 is an N6-acetyllysine (lysine 81). Residue arginine 82 coordinates NADP(+). Substrate contacts are provided by residues 94-100 (SPNGTIR) and arginine 109. Lysine 126 is subject to N6-succinyllysine. The substrate site is built by arginine 132 and lysine 212. Lysine 224, lysine 233, and lysine 243 each carry N6-acetyllysine. Aspartate 252 provides a ligand contact to Mn(2+). Lysine 260 is a binding site for NADP(+). 2 residues coordinate Mn(2+): aspartate 275 and aspartate 279. Position 310 to 315 (310 to 315 (GTVTRH)) interacts with NADP(+). Lysine 321 carries the post-translational modification N6-acetyllysine. Asparagine 328 provides a ligand contact to NADP(+). Serine 389 is subject to Phosphoserine. Lysine 400 is subject to N6-succinyllysine.

The protein belongs to the isocitrate and isopropylmalate dehydrogenases family. In terms of assembly, homodimer. Mg(2+) serves as cofactor. Requires Mn(2+) as cofactor. Acetylation at Lys-374 dramatically reduces catalytic activity. In terms of tissue distribution, highly expressed in the liver followed by kidney, lower expression in spleen, brain and lung.

The protein resides in the cytoplasm. It localises to the cytosol. It catalyses the reaction D-threo-isocitrate + NADP(+) = 2-oxoglutarate + CO2 + NADPH. With respect to regulation, irreversibly inhibited by Cd(2+) concentrations above 50 uM. Its function is as follows. Catalyzes the NADP(+)-dependent oxidative decarboxylation of isocitrate (D-threo-isocitrate) to 2-ketoglutarate (2-oxoglutarate), which is required by other enzymes such as the phytanoyl-CoA dioxygenase. Plays a critical role in the generation of NADPH, an important cofactor in many biosynthesis pathways. May act as a corneal epithelial crystallin and may be involved in maintaining corneal epithelial transparency. This Mus musculus (Mouse) protein is Isocitrate dehydrogenase [NADP] cytoplasmic (Idh1).